We begin with the raw amino-acid sequence, 248 residues long: Myelin protein P0 (248 aa).

The signal sequence occupies residues 1–29; sequence MAPGAPSSSPSPILAALLFSSLVLSPAQA. An Ig-like V-type domain is found at 30–143; the sequence is IVVYTDKEVY…DIVGKTSQVT (114 aa). Residues 30–153 lie on the Extracellular side of the membrane; sequence IVVYTDKEVY…LYVFEKVPTR (124 aa). C50 and C127 are joined by a disulfide. Residue N122 is glycosylated (N-linked (GlcNAc...) (complex) asparagine). A helical membrane pass occupies residues 154–179; it reads YGVVLGAVIGGVLGVVLLVLLLFYVV. The Cytoplasmic segment spans residues 180–248; it reads RYCWLRRQAA…GLGESRKDKK (69 aa). The residue at position 210 (S210) is a Phosphoserine; by PKC. The tract at residues 222–248 is disordered; that stretch reads MLDHSRSTKAASEKKAKGLGESRKDKK. A compositionally biased stretch (basic and acidic residues) spans 224 to 248; it reads DHSRSTKAASEKKAKGLGESRKDKK. 2 positions are modified to phosphoserine: S226 and S228. S233 and S243 each carry phosphoserine; by PKC.

Belongs to the myelin P0 protein family. Homodimer and homotetramer. In terms of processing, N-glycosylated; contains sulfate-substituted glycan.

The protein localises to the cell membrane. In terms of biological role, is an adhesion molecule necessary for normal myelination in the peripheral nervous system. It mediates adhesion between adjacent myelin wraps and ultimately drives myelin compaction. The protein is Myelin protein P0 (MPZ) of Equus caballus (Horse).